Reading from the N-terminus, the 457-residue chain is Peptidyl-prolyl cis-trans isomerase FKBP5 (457 aa).

M1 carries the N-acetylmethionine modification. The disordered stretch occupies residues M1–T26. Residue S13 is modified to Phosphoserine. K28 is subject to N6-acetyllysine. Residues G50–K138 enclose the PPIase FKBP-type 1 domain. The residue at position 155 (K155) is an N6-acetyllysine. Residues G165–E251 form the PPIase FKBP-type 2 domain. 3 TPR repeats span residues A268–E301, L317–N350, and E351–N384. Residues A421–V457 form a disordered region. S445 carries the phosphoserine modification.

Part of a heteromultimeric cytoplasmic complex with HSP90AA1, HSPA1A/HSPA1B and steroid receptors. Upon ligand binding dissociates from the complex and FKBP4 takes its place. Interacts with functionally mature heterooligomeric progesterone receptor complexes along with HSP90 and TEBP. Interacts with NR3C1. Interacts with Akt/AKT1 and PHLPP1; enhancing dephosphorylation and subsequent activation of Akt/AKT1. Interacts with IFI44L; this interaction modulates the kinase activity of IKBKB and IKBKE. Interacts with IKBKB and IKBKE. Acetylation impairs ability to promote interaction between Akt/AKT1 and PHLPP1. Deacetylation by SIRT7 promotes interaction between Akt/AKT1 and PHLPP1, leading to suppress Akt/AKT1 activation. Post-translationally, ubiquitinated, leading to degradation in a proteasome-dependent manner. Deubiquitinated by USP49, leading to stabilization.

Its subcellular location is the cytoplasm. It localises to the nucleus. The enzyme catalyses [protein]-peptidylproline (omega=180) = [protein]-peptidylproline (omega=0). Its activity is regulated as follows. Inhibited by both FK506 and rapamycin. Its function is as follows. Immunophilin protein with PPIase and co-chaperone activities. Component of unligated steroid receptors heterocomplexes through interaction with heat-shock protein 90 (HSP90). Plays a role in the intracellular trafficking of heterooligomeric forms of steroid hormone receptors maintaining the complex into the cytoplasm when unliganded. Acts as a regulator of Akt/AKT1 activity by promoting the interaction between Akt/AKT1 and PHLPP1, thereby enhancing dephosphorylation and subsequent activation of Akt/AKT1. Interacts with IKBKE and IKBKB which facilitates IKK complex assembly leading to increased IKBKE and IKBKB kinase activity, NF-kappaB activation, and IFN production. This chain is Peptidyl-prolyl cis-trans isomerase FKBP5 (FKBP5), found in Chlorocebus aethiops (Green monkey).